We begin with the raw amino-acid sequence, 308 residues long: Acyltransferase drtE (308 aa).

Residues 35–159 (PALVMNPGYN…AAEAKDNFSR (125 aa)) form the AB hydrolase-1 domain.

The protein belongs to the polyketide transferase af380 family.

It participates in secondary metabolite biosynthesis; terpenoid biosynthesis. Its function is as follows. Acyltransferase; part of the gene cluster that mediates the biosynthesis of various drimane-type sesquiterpene esters, compounds that exhibit diverse biological activities and are widely present in eukaryotes. The pathway begins with the synthesis of the backbone drimenol by the terpene cyclase drtB using farnesyl pyrophosphate (FPP) as substrate. The cytochrome P450 monooxygenase drtD is then responsible for the hydroxylations at C-6, C-9 and C-12, as well as the oxidation of hydroxyl groups at C-6 and C-11 to a ketone and an aldehyde, respectively. Then, the biosynthesis can go in two directions, either the hydroxylated drimenol is further hydroxylated at C-2 and C-3 by an enzyme(s) not associated with the drt cluster, or the FAD-binding oxidoreductase drtC further oxidizes C-11 or C-12 to form the butyrolactone ring. DrtB, drtD and drtC are solely responsible for the formation of the different drimane structures observed during drimane sesquiterpenes biosynthesis. The polyketide synthase drtA synthesizes different lengths (C6 and C8) of PKS chains, which are then oxidized to varying degrees by the short-chain dehydrogenase drtF. Finally, these PKS chains are transferred onto drimane sesquiterpenes by the acyltransferase drtE, forming the sesquiterpene esters. In addition to the different fatty acyl-CoA chains produced by drtA, drtE is also able to use cinnamoyl-CoA as a substrate. This is Acyltransferase drtE from Aspergillus calidoustus.